The following is a 122-amino-acid chain: Large ribosomal subunit protein uL18 (122 aa).

It belongs to the universal ribosomal protein uL18 family. As to quaternary structure, part of the 50S ribosomal subunit; part of the 5S rRNA/L5/L18/L25 subcomplex. Contacts the 5S and 23S rRNAs.

In terms of biological role, this is one of the proteins that bind and probably mediate the attachment of the 5S RNA into the large ribosomal subunit, where it forms part of the central protuberance. This chain is Large ribosomal subunit protein uL18, found in Leptospira interrogans serogroup Icterohaemorrhagiae serovar copenhageni (strain Fiocruz L1-130).